The sequence spans 570 residues: High-affinity hexose transporter HXT6 (570 aa).

Topologically, residues 1 to 60 (MSQDAAIAEQTPVEHLSAVDSASHSVLSTPSNKAERDEIKAYGEGEEHEPVVEIPKRPAS) are cytoplasmic. Residues 61-81 (AYVTVSIMCIMIAFGGFVFGW) form a helical membrane-spanning segment. The Extracellular segment spans residues 82–116 (DTGTISGFINQTDFIRRFGMKHKDGTNYLSKVRTG). N-linked (GlcNAc...) asparagine glycosylation occurs at Asn91. The chain crosses the membrane as a helical span at residues 117 to 137 (LIVSIFNIGCAIGGIILSKLG). Residues 138–143 (DMYGRK) lie on the Cytoplasmic side of the membrane. A helical membrane pass occupies residues 144–164 (VGLIVVVVIYIIGIIIQIASI). Topologically, residues 165–174 (NKWYQYFIGR) are extracellular. The helical transmembrane segment at 175-195 (IISGLGVGGIAVLSPMLISEV) threads the bilayer. The Cytoplasmic segment spans residues 196-201 (SPKHLR). A helical membrane pass occupies residues 202–222 (GTLVSCYQLMITAGIFLGYCT). The Extracellular portion of the chain corresponds to 223–236 (NFGTKNYSNSVQWR). Residue Asn228 is glycosylated (N-linked (GlcNAc...) asparagine). Residues 237–257 (VPLGLCFAWALFMIGGMTFVP) traverse the membrane as a helical segment. The Cytoplasmic segment spans residues 258–340 (ESPRYLAEVG…IQSLQQLTGD (83 aa)). The chain crosses the membrane as a helical span at residues 341 to 357 (NYFFYYGTTIFKAVGLS). Residues 358-363 (DSFETS) lie on the Extracellular side of the membrane. Residues 364–381 (IVLGIVNFASTFVGIYVV) form a helical membrane-spanning segment. Residues 382-388 (ERYGRRT) lie on the Cytoplasmic side of the membrane. Residues 389–409 (CLLWGAASMTACMVVYASVGV) traverse the membrane as a helical segment. Over 410–431 (TRLWPNGQDQPSSKGAGNCMIV) the chain is Extracellular. Residues 432–452 (FACFYIFCFATTWAPIPYVVV) traverse the membrane as a helical segment. Topologically, residues 453 to 469 (SETFPLRVKSKAMSIAT) are cytoplasmic. Residues 470-490 (AANWLWGFLIGFFTPFITGAI) form a helical membrane-spanning segment. A topological domain (extracellular) is located at residue Asn491. A helical transmembrane segment spans residues 492–512 (FYYGYVFMGCLVFMFFYVLLV). At 513–570 (VPETKGLTLEEVNTMWEEGVLPWKSASWVPPSRRGANYDAEEMAHDDKPLYKRMFSTK) the chain is on the cytoplasmic side. A Glycyl lysine isopeptide (Lys-Gly) (interchain with G-Cter in ubiquitin) cross-link involves residue Lys560.

It belongs to the major facilitator superfamily. Sugar transporter (TC 2.A.1.1) family.

The protein localises to the membrane. Its function is as follows. High-affinity glucose transporter. The polypeptide is High-affinity hexose transporter HXT6 (HXT6) (Saccharomyces cerevisiae (strain ATCC 204508 / S288c) (Baker's yeast)).